A 175-amino-acid polypeptide reads, in one-letter code: Adenine phosphoribosyltransferase (175 aa).

This sequence belongs to the purine/pyrimidine phosphoribosyltransferase family. As to quaternary structure, homodimer.

The protein resides in the cytoplasm. The enzyme catalyses AMP + diphosphate = 5-phospho-alpha-D-ribose 1-diphosphate + adenine. The protein operates within purine metabolism; AMP biosynthesis via salvage pathway; AMP from adenine: step 1/1. Functionally, catalyzes a salvage reaction resulting in the formation of AMP, that is energically less costly than de novo synthesis. The sequence is that of Adenine phosphoribosyltransferase from Nitrosospira multiformis (strain ATCC 25196 / NCIMB 11849 / C 71).